The sequence spans 514 residues: Glucose-6-phosphate 1-dehydrogenase 2 (514 aa).

Arg69 and Lys176 together coordinate NADP(+). Residues His206, Lys210, Glu244, and Asp263 each contribute to the substrate site. Catalysis depends on His268, which acts as the Proton acceptor. Lys366 provides a ligand contact to substrate.

This sequence belongs to the glucose-6-phosphate dehydrogenase family.

It catalyses the reaction D-glucose 6-phosphate + NADP(+) = 6-phospho-D-glucono-1,5-lactone + NADPH + H(+). It participates in carbohydrate degradation; pentose phosphate pathway; D-ribulose 5-phosphate from D-glucose 6-phosphate (oxidative stage): step 1/3. Its function is as follows. Catalyzes the oxidation of glucose 6-phosphate to 6-phosphogluconolactone. This is Glucose-6-phosphate 1-dehydrogenase 2 from Mycobacterium bovis (strain ATCC BAA-935 / AF2122/97).